A 61-amino-acid chain; its full sequence is uncharacterized protein (61 aa).

Positions M1–E40 are disordered. Over residues C9–E25 the composition is skewed to basic and acidic residues.

This is an uncharacterized protein from Caenorhabditis elegans.